A 153-amino-acid polypeptide reads, in one-letter code: NADPH-dependent 7-cyano-7-deazaguanine reductase (153 aa).

A disordered region spans residues 1–30; the sequence is MDSIETHAKQLGQQTPLPASPEAAQLDRVP. Cys51 acts as the Thioimide intermediate in catalysis. Asp58 (proton donor) is an active-site residue. Residues 73–75 and 92–93 each bind substrate; these read VES and HE.

This sequence belongs to the GTP cyclohydrolase I family. QueF type 1 subfamily.

The protein localises to the cytoplasm. The catalysed reaction is 7-aminomethyl-7-carbaguanine + 2 NADP(+) = 7-cyano-7-deazaguanine + 2 NADPH + 3 H(+). It participates in tRNA modification; tRNA-queuosine biosynthesis. Functionally, catalyzes the NADPH-dependent reduction of 7-cyano-7-deazaguanine (preQ0) to 7-aminomethyl-7-deazaguanine (preQ1). This Methylorubrum extorquens (strain CM4 / NCIMB 13688) (Methylobacterium extorquens) protein is NADPH-dependent 7-cyano-7-deazaguanine reductase.